The chain runs to 296 residues: N-acetylmuramic acid 6-phosphate etherase (296 aa).

Positions 54 to 217 (VTESFRKGGR…STTSMVGIGK (164 aa)) constitute an SIS domain. The Proton donor role is filled by Glu82. Residue Glu113 is part of the active site.

Belongs to the GCKR-like family. MurNAc-6-P etherase subfamily. In terms of assembly, homodimer.

It catalyses the reaction N-acetyl-D-muramate 6-phosphate + H2O = N-acetyl-D-glucosamine 6-phosphate + (R)-lactate. The protein operates within amino-sugar metabolism; N-acetylmuramate degradation. Specifically catalyzes the cleavage of the D-lactyl ether substituent of MurNAc 6-phosphate, producing GlcNAc 6-phosphate and D-lactate. This is N-acetylmuramic acid 6-phosphate etherase from Listeria welshimeri serovar 6b (strain ATCC 35897 / DSM 20650 / CCUG 15529 / CIP 8149 / NCTC 11857 / SLCC 5334 / V8).